A 452-amino-acid chain; its full sequence is UDP-N-acetylmuramoylalanine--D-glutamate ligase (452 aa).

Position 119–125 (119–125) interacts with ATP; sequence GSNGKTT.

It belongs to the MurCDEF family.

It localises to the cytoplasm. The enzyme catalyses UDP-N-acetyl-alpha-D-muramoyl-L-alanine + D-glutamate + ATP = UDP-N-acetyl-alpha-D-muramoyl-L-alanyl-D-glutamate + ADP + phosphate + H(+). The protein operates within cell wall biogenesis; peptidoglycan biosynthesis. In terms of biological role, cell wall formation. Catalyzes the addition of glutamate to the nucleotide precursor UDP-N-acetylmuramoyl-L-alanine (UMA). This Streptococcus pyogenes serotype M6 (strain ATCC BAA-946 / MGAS10394) protein is UDP-N-acetylmuramoylalanine--D-glutamate ligase.